The primary structure comprises 82 residues: Sigma-G-dependent sporulation-specific SASP protein (82 aa).

The chain is Sigma-G-dependent sporulation-specific SASP protein from Bacillus subtilis (strain 168).